Here is a 110-residue protein sequence, read N- to C-terminus: Large ribosomal subunit protein uL22 (110 aa).

This sequence belongs to the universal ribosomal protein uL22 family. Part of the 50S ribosomal subunit.

In terms of biological role, this protein binds specifically to 23S rRNA; its binding is stimulated by other ribosomal proteins, e.g. L4, L17, and L20. It is important during the early stages of 50S assembly. It makes multiple contacts with different domains of the 23S rRNA in the assembled 50S subunit and ribosome. Functionally, the globular domain of the protein is located near the polypeptide exit tunnel on the outside of the subunit, while an extended beta-hairpin is found that lines the wall of the exit tunnel in the center of the 70S ribosome. This chain is Large ribosomal subunit protein uL22, found in Hahella chejuensis (strain KCTC 2396).